The following is a 387-amino-acid chain: Queuine tRNA-ribosyltransferase (387 aa).

Residue aspartate 93 is the Proton acceptor of the active site. Substrate contacts are provided by residues 93–97 (DSGGF), aspartate 147, glutamine 190, and glycine 217. The RNA binding stretch occupies residues 248-254 (GVGTPDD). Aspartate 267 acts as the Nucleophile in catalysis. The segment at 272–276 (TRAGR) is RNA binding; important for wobble base 34 recognition. Residues cysteine 305, cysteine 307, cysteine 310, and histidine 336 each coordinate Zn(2+).

Belongs to the queuine tRNA-ribosyltransferase family. In terms of assembly, homodimer. Within each dimer, one monomer is responsible for RNA recognition and catalysis, while the other monomer binds to the replacement base PreQ1. Zn(2+) serves as cofactor.

It carries out the reaction 7-aminomethyl-7-carbaguanine + guanosine(34) in tRNA = 7-aminomethyl-7-carbaguanosine(34) in tRNA + guanine. Its pathway is tRNA modification; tRNA-queuosine biosynthesis. Functionally, catalyzes the base-exchange of a guanine (G) residue with the queuine precursor 7-aminomethyl-7-deazaguanine (PreQ1) at position 34 (anticodon wobble position) in tRNAs with GU(N) anticodons (tRNA-Asp, -Asn, -His and -Tyr). Catalysis occurs through a double-displacement mechanism. The nucleophile active site attacks the C1' of nucleotide 34 to detach the guanine base from the RNA, forming a covalent enzyme-RNA intermediate. The proton acceptor active site deprotonates the incoming PreQ1, allowing a nucleophilic attack on the C1' of the ribose to form the product. After dissociation, two additional enzymatic reactions on the tRNA convert PreQ1 to queuine (Q), resulting in the hypermodified nucleoside queuosine (7-(((4,5-cis-dihydroxy-2-cyclopenten-1-yl)amino)methyl)-7-deazaguanosine). This is Queuine tRNA-ribosyltransferase from Gluconacetobacter diazotrophicus (strain ATCC 49037 / DSM 5601 / CCUG 37298 / CIP 103539 / LMG 7603 / PAl5).